A 484-amino-acid chain; its full sequence is Glutamyl-tRNA(Gln) amidotransferase subunit A (484 aa).

Active-site charge relay system residues include Lys-76 and Ser-151. Residue Ser-175 is the Acyl-ester intermediate of the active site.

Belongs to the amidase family. GatA subfamily. As to quaternary structure, heterotrimer of A, B and C subunits.

The enzyme catalyses L-glutamyl-tRNA(Gln) + L-glutamine + ATP + H2O = L-glutaminyl-tRNA(Gln) + L-glutamate + ADP + phosphate + H(+). In terms of biological role, allows the formation of correctly charged Gln-tRNA(Gln) through the transamidation of misacylated Glu-tRNA(Gln) in organisms which lack glutaminyl-tRNA synthetase. The reaction takes place in the presence of glutamine and ATP through an activated gamma-phospho-Glu-tRNA(Gln). This is Glutamyl-tRNA(Gln) amidotransferase subunit A from Alkalilimnicola ehrlichii (strain ATCC BAA-1101 / DSM 17681 / MLHE-1).